The chain runs to 383 residues: Chitinase-3-like protein 1 (383 aa).

The N-terminal stretch at 1-21 is a signal peptide; sequence MGLRASGTGFVVLVLLQSCAA. The GH18 domain maps to 22–383; sequence YKLICYYTSW…SAVKDVLAEV (362 aa). A disulfide bridge connects residues Cys-26 and Cys-51. Asn-60 carries an N-linked (GlcNAc...) asparagine glycan. Residues 70-71, 97-100, Tyr-141, 204-207, and Arg-263 contribute to the chitin site; these read EW, GGWN, and LTYD. Cys-300 and Cys-364 form a disulfide bridge. The important for AKT1 activation and IL8 production stretch occupies residues 324 to 338; it reads QWVAYDDQESVKNKA. A chitin-binding site is contributed by Trp-352. N-linked (GlcNAc...) asparagine glycosylation is present at Asn-367.

Belongs to the glycosyl hydrolase 18 family. Monomer.

Its subcellular location is the secreted. The protein resides in the extracellular space. The protein localises to the cytoplasm. It localises to the perinuclear region. It is found in the endoplasmic reticulum. Its function is as follows. Carbohydrate-binding lectin with a preference for chitin. Has no chitinase activity. May play a role in tissue remodeling and in the capacity of cells to respond to and cope with changes in their environment. Plays a role in T-helper cell type 2 (Th2) inflammatory response and IL-13-induced inflammation, regulating allergen sensitization, inflammatory cell apoptosis, dendritic cell accumulation and M2 macrophage differentiation. Facilitates invasion of pathogenic enteric bacteria into colonic mucosa and lymphoid organs. Mediates activation of AKT1 signaling pathway and subsequent IL8 production in colonic epithelial cells. Regulates antibacterial responses in lung by contributing to macrophage bacterial killing, controlling bacterial dissemination and augmenting host tolerance. Also regulates hyperoxia-induced injury, inflammation and epithelial apoptosis in lung. The polypeptide is Chitinase-3-like protein 1 (CHI3L1) (Capra hircus (Goat)).